The following is a 169-amino-acid chain: Peptide deformylase (169 aa).

Fe cation-binding residues include C94 and H136. Residue E137 is part of the active site. H140 serves as a coordination point for Fe cation.

Belongs to the polypeptide deformylase family. Fe(2+) is required as a cofactor.

It carries out the reaction N-terminal N-formyl-L-methionyl-[peptide] + H2O = N-terminal L-methionyl-[peptide] + formate. Removes the formyl group from the N-terminal Met of newly synthesized proteins. Requires at least a dipeptide for an efficient rate of reaction. N-terminal L-methionine is a prerequisite for activity but the enzyme has broad specificity at other positions. This is Peptide deformylase from Desulfotalea psychrophila (strain LSv54 / DSM 12343).